Here is a 253-residue protein sequence, read N- to C-terminus: MTLSSTTPRPLIAGNWKMNGLSVALDEARAVAAALEAKPPAARVAIFPPATLLHRLSQAVEGAHLLTGGQDCHGKSSGAHTGDVSAEMVADAGGSLVICGHSERRTDHGETSAQVAGKAEAAAAAGLEPIVCVGETLETREAGQAVSFVVSQVRDSLPTSLAGKAFSVAYEPLWAIGTGRTASVDNIVEMHAAIRAELVSRFCEQGRTVLILYGGSVKPENAREILAAPEVGGALVGGASLKAKDFLAIIQAL.

15 to 17 is a binding site for substrate; it reads NWK. His-101 functions as the Electrophile in the catalytic mechanism. Glu-171 functions as the Proton acceptor in the catalytic mechanism. Substrate-binding positions include Gly-177, Ser-216, and 237–238; that span reads GG.

It belongs to the triosephosphate isomerase family. As to quaternary structure, homodimer.

The protein localises to the cytoplasm. The enzyme catalyses D-glyceraldehyde 3-phosphate = dihydroxyacetone phosphate. It participates in carbohydrate biosynthesis; gluconeogenesis. The protein operates within carbohydrate degradation; glycolysis; D-glyceraldehyde 3-phosphate from glycerone phosphate: step 1/1. In terms of biological role, involved in the gluconeogenesis. Catalyzes stereospecifically the conversion of dihydroxyacetone phosphate (DHAP) to D-glyceraldehyde-3-phosphate (G3P). This Caulobacter vibrioides (strain ATCC 19089 / CIP 103742 / CB 15) (Caulobacter crescentus) protein is Triosephosphate isomerase.